The sequence spans 352 residues: Histidinol-phosphate aminotransferase (352 aa).

K210 is subject to N6-(pyridoxal phosphate)lysine.

It belongs to the class-II pyridoxal-phosphate-dependent aminotransferase family. Histidinol-phosphate aminotransferase subfamily. As to quaternary structure, homodimer. The cofactor is pyridoxal 5'-phosphate.

It carries out the reaction L-histidinol phosphate + 2-oxoglutarate = 3-(imidazol-4-yl)-2-oxopropyl phosphate + L-glutamate. It participates in amino-acid biosynthesis; L-histidine biosynthesis; L-histidine from 5-phospho-alpha-D-ribose 1-diphosphate: step 7/9. This is Histidinol-phosphate aminotransferase from Clostridium acetobutylicum (strain ATCC 824 / DSM 792 / JCM 1419 / IAM 19013 / LMG 5710 / NBRC 13948 / NRRL B-527 / VKM B-1787 / 2291 / W).